The primary structure comprises 531 residues: Fe-S cluster assembly factor HCF101, chloroplastic (531 aa).

A chloroplast-targeting transit peptide spans 1–62 (MRNLRAAAPA…PRRVGRLRRR (62 aa)). Positions 17-27 (APPLLLPPSTP) are enriched in pro residues. The segment at 17–37 (APPLLLPPSTPTPRGAFSAKA) is disordered. The span at 28-37 (TPRGAFSAKA) shows a compositional bias: low complexity. Residue 181 to 188 (CKGGVGKS) coordinates ATP.

This sequence belongs to the Mrp/NBP35 ATP-binding proteins family. [4Fe-4S] cluster serves as cofactor.

The protein localises to the plastid. It localises to the chloroplast stroma. Required for photosystem I (PSI) biosynthesis and assembly. May serve as a chloroplast scaffold protein that specifically assembles iron-sulfur (4Fe-4S) clusters and transfers them to the chloroplast PSI and ferredoxin-thioredoxin (FTR) complexes. Probably not required for assembly or stability of plastidic 2Fe-2S clusters. The chain is Fe-S cluster assembly factor HCF101, chloroplastic (HCF101) from Oryza sativa subsp. japonica (Rice).